Here is a 306-residue protein sequence, read N- to C-terminus: MVKVAFIGVGRVGQTIAYNTIVNGYADEVMLYDVVPELPEKFEHEIRHALAALRVKTELLSTNNIDDISGADIVVITAGKPRKPGMSRRDLFIDNAKIMIDLAKKLPKKNKGAMYIMVANPVDMMASVFMKYSGENTISTGNQVETMRMRSYIAKKLNIPAYEVGGYVGGEHGEAAMVLWSTVTVKGKPFSESLGVNKAEVEDYVKKIAAEIIRVLGGTTWGPGADIEEVIRSVALNEGKVMSVAFPHKYEDEIIHISEPVVVGRTVGPALTSALDENDKARLSQAIKEVYNVYKSNLKELEQVIS.

NAD(+) contacts are provided by residues 8 to 13 and D33; that span reads GVGRVG. The substrate site is built by R82 and R88. Residues N95 and 118-120 each bind NAD(+); that span reads VAN. Substrate is bound by residues N120 and R148. H172 functions as the Proton acceptor in the catalytic mechanism.

It belongs to the LDH/MDH superfamily.

The enzyme catalyses (S)-malate + NAD(+) = oxaloacetate + NADH + H(+). Catalyzes the reversible oxidation of malate to oxaloacetate. This is Malate dehydrogenase (mdh) from Sulfolobus acidocaldarius (strain ATCC 33909 / DSM 639 / JCM 8929 / NBRC 15157 / NCIMB 11770).